Reading from the N-terminus, the 298-residue chain is Type II methyltransferase M.MjaIV (298 aa).

It carries out the reaction a 2'-deoxyadenosine in DNA + S-adenosyl-L-methionine = an N(6)-methyl-2'-deoxyadenosine in DNA + S-adenosyl-L-homocysteine + H(+). A methylase that recognizes the double-stranded sequence 5'-GTNNAC-3', methylates A-5 on both strands, and protects the DNA from cleavage by the MjaIV endonuclease. This Methanocaldococcus jannaschii (strain ATCC 43067 / DSM 2661 / JAL-1 / JCM 10045 / NBRC 100440) (Methanococcus jannaschii) protein is Type II methyltransferase M.MjaIV (mjaIVMP).